A 348-amino-acid chain; its full sequence is tRNA pseudouridine synthase D (348 aa).

Phenylalanine 26 contacts substrate. The active-site Nucleophile is the aspartate 79. Asparagine 128 is a binding site for substrate. One can recognise a TRUD domain in the interval 154 to 302 (GVPNYFGSQR…VDPARRALLL (149 aa)). Phenylalanine 328 lines the substrate pocket.

Belongs to the pseudouridine synthase TruD family.

The catalysed reaction is uridine(13) in tRNA = pseudouridine(13) in tRNA. Responsible for synthesis of pseudouridine from uracil-13 in transfer RNAs. In Serratia proteamaculans (strain 568), this protein is tRNA pseudouridine synthase D.